The chain runs to 1351 residues: ABC transporter C family member 6 (1351 aa).

The ABC transmembrane type-1 1 domain maps to 112–397 (NKYALVSNLF…LPYDIFKAIG (286 aa)). 3 helical membrane-spanning segments follow: residues 120 to 140 (LFII…INYI), 149 to 169 (SILK…GQSI), and 248 to 268 (LLCY…VIAL). The ABC transporter 1 domain occupies 474 to 700 (NQDESINKKE…GIDFKSILKT (227 aa)). Residue 510–517 (GVVGSGKT) participates in ATP binding. The stretch at 701-734 (KEIKKNVENETDSEELIKNEIEIENEIIDVNNAI) forms a coiled coil. Helical transmembrane passes span 771-791 (GSSG…QAIF), 815-835 (IGYY…RILL), 904-924 (LISI…LSIA), 977-999 (MFDN…RWVS), 1002-1022 (LEVM…LFIS), and 1025-1045 (GLAA…SWGI). One can recognise an ABC transmembrane type-1 2 domain in the interval 777 to 1060 (LFITISLFFV…LEVKMNSFQR (284 aa)). The region spanning 1101–1336 (IEFKNVEIKY…PNSKFNKLIK (236 aa)) is the ABC transporter 2 domain. 1135-1142 (GRTGAGKT) serves as a coordination point for ATP.

This sequence belongs to the ABC transporter superfamily. ABCC family. Conjugate transporter (TC 3.A.1.208) subfamily.

The protein localises to the membrane. The chain is ABC transporter C family member 6 (abcC6) from Dictyostelium discoideum (Social amoeba).